The sequence spans 838 residues: DNA gyrase subunit A (838 aa).

The residue at position 2 (T2) is an N-acetylthreonine. In terms of domain architecture, Topo IIA-type catalytic spans 41-510; sequence LPEVRDGLKP…ADGDVSDEDL (470 aa). Y129 (O-(5'-phospho-DNA)-tyrosine intermediate) is an active-site residue. Ca(2+)-binding residues include D504, S506, E508, and D515. An EF-hand domain is found at 504–516; the sequence is DVSDEDLIAREDV. The C-terminal domain CTD stretch occupies residues 514 to 838; the sequence is EDVVVTITET…DANGADQTGN (325 aa). The short motif at 537–543 is the GyrA-box element; that stretch reads QKRGGKG. The GyrA-box-1 signature appears at 743–749; sequence QGRGGKG.

The protein belongs to the type II topoisomerase GyrA/ParC subunit family. Heterotetramer, composed of two GyrA and two GyrB chains. In the heterotetramer, GyrA contains the active site tyrosine that forms a transient covalent intermediate with DNA, while GyrB binds cofactors and catalyzes ATP hydrolysis. It depends on Ca(2+) as a cofactor.

The protein localises to the cytoplasm. It catalyses the reaction ATP-dependent breakage, passage and rejoining of double-stranded DNA.. With respect to regulation, DNA supercoiling inhibited by (fluoro)quinoline antibiotics such as sparfloxacin and levofloxacin, which usually act on GyrA. DNA supercoiling inhibited by the coumarin antibiotic novobiocin which acts on GyrB. Quinolones lead to gyrase-mediated dsDNA cleavage while preventing reclosure. DNA supercoiling activity inhibited by aminopyrazinamide and pyrrolamide derivatives, probably via effects on the GyrB subunit. DNA relaxation inhibited by ATP and its analogs. DNA supercoiling, relaxation, decatenation and quinolone-promoted DNA cleavage are inhibited by MfpA (50% inhibition occurs at 2 uM), inhibition of gyrase activities is enhanced in a concentration-dependent manner by MfpA. A type II topoisomerase that negatively supercoils closed circular double-stranded (ds) DNA in an ATP-dependent manner to maintain chromosomes in an underwound state, while in the absence of ATP it relaxes supercoiled dsDNA. Also catalyzes the interconversion of other topological isomers of dsDNA rings, including catenanes. Gyrase from M.tuberculosis has higher decatenation than supercoiling activity compared to E.coli; as M.tuberculosis only has 1 type II topoisomerase, gyrase has to fulfill the decatenation function of topoisomerase IV as well. At comparable concentrations M.tuberculosis gyrase cannot introduce as many negative supercoils into DNA as the E.coli enzyme, and its ATPase activity is lower, perhaps because it does not couple DNA wrapping and ATP binding as well as E.coli. Its function is as follows. Negative supercoiling favors strand separation, and DNA replication, transcription, recombination and repair, all of which involve strand separation. Type II topoisomerases break and join 2 DNA strands simultaneously in an ATP-dependent manner. The polypeptide is DNA gyrase subunit A (Mycobacterium tuberculosis (strain ATCC 25618 / H37Rv)).